The following is a 126-amino-acid chain: Aspartate 1-decarboxylase (126 aa).

The Schiff-base intermediate with substrate; via pyruvic acid role is filled by Ser-25. Ser-25 is subject to Pyruvic acid (Ser). Position 57 (Thr-57) interacts with substrate. The Proton donor role is filled by Tyr-58. Residue 73 to 75 (GGA) coordinates substrate.

This sequence belongs to the PanD family. Heterooctamer of four alpha and four beta subunits. Requires pyruvate as cofactor. Is synthesized initially as an inactive proenzyme, which is activated by self-cleavage at a specific serine bond to produce a beta-subunit with a hydroxyl group at its C-terminus and an alpha-subunit with a pyruvoyl group at its N-terminus.

It localises to the cytoplasm. It carries out the reaction L-aspartate + H(+) = beta-alanine + CO2. It participates in cofactor biosynthesis; (R)-pantothenate biosynthesis; beta-alanine from L-aspartate: step 1/1. Its function is as follows. Catalyzes the pyruvoyl-dependent decarboxylation of aspartate to produce beta-alanine. The protein is Aspartate 1-decarboxylase of Acinetobacter baumannii (strain AB307-0294).